A 361-amino-acid polypeptide reads, in one-letter code: Peptide chain release factor 1 (361 aa).

The residue at position 237 (Q237) is an N5-methylglutamine. Residues 286–306 (AKQDQEQAAKRKSLVGSGDRS) are disordered.

This sequence belongs to the prokaryotic/mitochondrial release factor family. In terms of processing, methylated by PrmC. Methylation increases the termination efficiency of RF1.

Its subcellular location is the cytoplasm. In terms of biological role, peptide chain release factor 1 directs the termination of translation in response to the peptide chain termination codons UAG and UAA. In Coxiella burnetii (strain CbuK_Q154) (Coxiella burnetii (strain Q154)), this protein is Peptide chain release factor 1.